The following is a 352-amino-acid chain: Photosystem II D2 protein (352 aa).

The chain crosses the membrane as a helical span at residues 40–60 (TAYLALGGWLTGTTFVTSWYT). His-117 is a binding site for chlorophyll a. The chain crosses the membrane as a helical span at residues 124–140 (GFMLRQFEIARLVGIRP). Pheophytin a is bound by residues Gln-129 and Asn-142. A helical membrane pass occupies residues 152–165 (VFVSVFLIYPLGQS). His-197 is a binding site for chlorophyll a. Residues 207-227 (GALLCAIHGATVENTLFEDGE) traverse the membrane as a helical segment. Residues His-214 and Phe-261 each contribute to the a plastoquinone site. His-214 is a binding site for Fe cation. His-268 contacts Fe cation. A helical transmembrane segment spans residues 278–294 (GLWTSSIGIIGLALNLR).

The protein belongs to the reaction center PufL/M/PsbA/D family. As to quaternary structure, PSII is composed of 1 copy each of membrane proteins PsbA, PsbB, PsbC, PsbD, PsbE, PsbF, PsbH, PsbI, PsbJ, PsbK, PsbL, PsbM, PsbT, PsbX, PsbY, PsbZ, Psb30/Ycf12, at least 3 peripheral proteins of the oxygen-evolving complex and a large number of cofactors. It forms dimeric complexes. Requires The D1/D2 heterodimer binds P680, chlorophylls that are the primary electron donor of PSII, and subsequent electron acceptors. It shares a non-heme iron and each subunit binds pheophytin, quinone, additional chlorophylls, carotenoids and lipids. There is also a Cl(-1) ion associated with D1 and D2, which is required for oxygen evolution. The PSII complex binds additional chlorophylls, carotenoids and specific lipids. as cofactor.

The protein resides in the plastid. It is found in the organellar chromatophore thylakoid membrane. The enzyme catalyses 2 a plastoquinone + 4 hnu + 2 H2O = 2 a plastoquinol + O2. Photosystem II (PSII) is a light-driven water:plastoquinone oxidoreductase that uses light energy to abstract electrons from H(2)O, generating O(2) and a proton gradient subsequently used for ATP formation. It consists of a core antenna complex that captures photons, and an electron transfer chain that converts photonic excitation into a charge separation. The D1/D2 (PsbA/PsbD) reaction center heterodimer binds P680, the primary electron donor of PSII as well as several subsequent electron acceptors. D2 is needed for assembly of a stable PSII complex. This Paulinella chromatophora protein is Photosystem II D2 protein.